The primary structure comprises 340 residues: MIKIILAQPRGFCAGVIRAIEIVDQALDRVGAPVYVRHEIVHNRHVVDTLKAKGAVFVEELSEVPPGEVTVFSAHGVARTVQKEAEERGLPVVDATCPLVNKVHAQGRRYLSHGRTLILIGHAGHPEIEGTLGQIDGPVHLVGSAEQVDSLDIPSDTPVAFITQTTLSVDDTRSVIAALRKKFTDVIGPDTSDICYATQNRQAAVRDLCKQSDLILVVGSPNSSNSNRLREIGLEEGLPSYLIADGSEIDPVWFEGINTVGLTAGASAPEELVQSVITAIRALGPVTVEQLDGVEEKIAFRLPPTLRHLKARNAAHNNLDNKTAASEEADSLSNDTEQEA.

C13 provides a ligand contact to [4Fe-4S] cluster. (2E)-4-hydroxy-3-methylbut-2-enyl diphosphate contacts are provided by H42 and H75. Dimethylallyl diphosphate contacts are provided by H42 and H75. 2 residues coordinate isopentenyl diphosphate: H42 and H75. A [4Fe-4S] cluster-binding site is contributed by C97. A (2E)-4-hydroxy-3-methylbut-2-enyl diphosphate-binding site is contributed by H125. H125 is a binding site for dimethylallyl diphosphate. Residue H125 coordinates isopentenyl diphosphate. E127 acts as the Proton donor in catalysis. Residue T165 participates in (2E)-4-hydroxy-3-methylbut-2-enyl diphosphate binding. Residue C195 participates in [4Fe-4S] cluster binding. (2E)-4-hydroxy-3-methylbut-2-enyl diphosphate-binding residues include S223, S224, N225, and S267. The dimethylallyl diphosphate site is built by S223, S224, N225, and S267. Isopentenyl diphosphate-binding residues include S223, S224, N225, and S267. A disordered region spans residues 317–340 (NNLDNKTAASEEADSLSNDTEQEA). Over residues 331–340 (SLSNDTEQEA) the composition is skewed to polar residues.

It belongs to the IspH family. Requires [4Fe-4S] cluster as cofactor.

The enzyme catalyses isopentenyl diphosphate + 2 oxidized [2Fe-2S]-[ferredoxin] + H2O = (2E)-4-hydroxy-3-methylbut-2-enyl diphosphate + 2 reduced [2Fe-2S]-[ferredoxin] + 2 H(+). It catalyses the reaction dimethylallyl diphosphate + 2 oxidized [2Fe-2S]-[ferredoxin] + H2O = (2E)-4-hydroxy-3-methylbut-2-enyl diphosphate + 2 reduced [2Fe-2S]-[ferredoxin] + 2 H(+). It participates in isoprenoid biosynthesis; dimethylallyl diphosphate biosynthesis; dimethylallyl diphosphate from (2E)-4-hydroxy-3-methylbutenyl diphosphate: step 1/1. It functions in the pathway isoprenoid biosynthesis; isopentenyl diphosphate biosynthesis via DXP pathway; isopentenyl diphosphate from 1-deoxy-D-xylulose 5-phosphate: step 6/6. Catalyzes the conversion of 1-hydroxy-2-methyl-2-(E)-butenyl 4-diphosphate (HMBPP) into a mixture of isopentenyl diphosphate (IPP) and dimethylallyl diphosphate (DMAPP). Acts in the terminal step of the DOXP/MEP pathway for isoprenoid precursor biosynthesis. The protein is 4-hydroxy-3-methylbut-2-enyl diphosphate reductase of Zymomonas mobilis subsp. mobilis (strain ATCC 31821 / ZM4 / CP4).